The sequence spans 97 residues: Protein RnfH (97 aa).

This sequence belongs to the UPF0125 (RnfH) family.

The chain is Protein RnfH from Proteus mirabilis (strain HI4320).